A 417-amino-acid polypeptide reads, in one-letter code: UPF0761 membrane protein Daci_4966 (417 aa).

The next 6 membrane-spanning stretches (helical) occupy residues 49-69, 106-126, 146-166, 187-207, 235-255, and 256-276; these read VLAL…FPIF, QLGM…ILTI, VLIY…SLVL, FIFD…LYHY, ALGL…TFAT, and LPIL…GAVV.

It belongs to the UPF0761 family.

Its subcellular location is the cell inner membrane. The sequence is that of UPF0761 membrane protein Daci_4966 from Delftia acidovorans (strain DSM 14801 / SPH-1).